Reading from the N-terminus, the 1021-residue chain is Ankyrin repeat- and BTB/POZ domain-containing protein 3-A (1021 aa).

A helical transmembrane segment spans residues 160-180 (MVLSWTISVNCITAALSALSL). ANK repeat units follow at residues 515 to 544 (QGMTPLMYSCVRGDEAMVQMLLDAGADINS), 561 to 590 (RQGTPLTFAVLHGHVPVVQLLLDARANVEG), 599 to 628 (YTETPLQLASAAGNFELVSLLLERGADPLI), and 642 to 671 (GEMNSYSLAAAHGHRNVFRKLLSQVEKDKG). Positions 836 to 902 (SDVTFLVEGK…LYCGGTESLH (67 aa)) constitute a BTB domain.

It localises to the membrane. The protein is Ankyrin repeat- and BTB/POZ domain-containing protein 3-A (abtb3a) of Danio rerio (Zebrafish).